The sequence spans 404 residues: Caspase-1 (404 aa).

In terms of domain architecture, CARD spans 1–91; it reads MADKVLKDKR…HLAQTLGLSS (91 aa). A propeptide spanning residues 1-119 is cleaved from the precursor; the sequence is MADKVLKDKR…SLPAFVENMP (119 aa). Residues H237 and C285 contribute to the active site. Residues 298–316 constitute a propeptide that is removed on maturation; that stretch reads SPKASTDSWTHQPLMLQSD. Position 302 is a phosphoserine (S302).

Belongs to the peptidase C14A family. As to quaternary structure, heterotetramer that consists of two anti-parallel arranged heterodimers, each one formed by a 20 kDa (Caspase-1 subunit p20) and a 10 kDa (Caspase-1 subunit p10) subunit. May be a component of the inflammasome, a protein complex which also includes PYCARD, CARD8 and NLRP2 and whose function would be the activation of pro-inflammatory caspases. Component of the AIM2 PANoptosome complex, a multiprotein complex that drives inflammatory cell death (PANoptosis). Both the p10 and p20 subunits interact with MEFV. Interacts with CARD17P/INCA and CARD18. Interacts with SERPINB1; this interaction regulates CASP1 activity. Heterotetramer that consists of two anti-parallel arranged heterodimers, each one formed by a 20 kDa (Caspase-1 subunit p20) and a 10 kDa (Caspase-1 subunit p10) subunit. In terms of processing, the two subunits are derived from the precursor sequence by an autocatalytic mechanism. Post-translationally, ubiquitinated via 'Lys-11'-linked polyubiquitination. Deubiquitinated by USP8.

The protein resides in the cytoplasm. It localises to the cell membrane. It catalyses the reaction Strict requirement for an Asp residue at position P1 and has a preferred cleavage sequence of Tyr-Val-Ala-Asp-|-.. Thiol protease involved in a variety of inflammatory processes by proteolytically cleaving other proteins, such as the precursors of the inflammatory cytokines interleukin-1 beta (IL1B) and interleukin 18 (IL18) as well as the pyroptosis inducer Gasdermin-D (GSDMD), into active mature peptides. Plays a key role in cell immunity as an inflammatory response initiator: once activated through formation of an inflammasome complex, it initiates a pro-inflammatory response through the cleavage of the two inflammatory cytokines IL1B and IL18, releasing the mature cytokines which are involved in a variety of inflammatory processes. Cleaves a tetrapeptide after an Asp residue at position P1. Also initiates pyroptosis, a programmed lytic cell death pathway, through cleavage of GSDMD. In contrast to cleavage of interleukin IL1B, recognition and cleavage of GSDMD is not strictly dependent on the consensus cleavage site but depends on an exosite interface on CASP1 that recognizes and binds the Gasdermin-D, C-terminal (GSDMD-CT) part. Cleaves and activates CASP7 in response to bacterial infection, promoting plasma membrane repair. Upon inflammasome activation, during DNA virus infection but not RNA virus challenge, controls antiviral immunity through the cleavage of CGAS, rendering it inactive. In apoptotic cells, cleaves SPHK2 which is released from cells and remains enzymatically active extracellularly. The polypeptide is Caspase-1 (CASP1) (Canis lupus familiaris (Dog)).